We begin with the raw amino-acid sequence, 173 residues long: Nicotinamide-nucleotide adenylyltransferase (173 aa).

This sequence belongs to the archaeal NMN adenylyltransferase family.

The protein resides in the cytoplasm. The catalysed reaction is beta-nicotinamide D-ribonucleotide + ATP + H(+) = diphosphate + NAD(+). Its pathway is cofactor biosynthesis; NAD(+) biosynthesis; NAD(+) from nicotinamide D-ribonucleotide: step 1/1. The polypeptide is Nicotinamide-nucleotide adenylyltransferase (Methanosarcina barkeri (strain Fusaro / DSM 804)).